Consider the following 208-residue polypeptide: Large ribosomal subunit protein uL3 (208 aa).

Q149 bears the N5-methylglutamine mark.

It belongs to the universal ribosomal protein uL3 family. As to quaternary structure, part of the 50S ribosomal subunit. Forms a cluster with proteins L14 and L19. Methylated by PrmB.

Functionally, one of the primary rRNA binding proteins, it binds directly near the 3'-end of the 23S rRNA, where it nucleates assembly of the 50S subunit. The protein is Large ribosomal subunit protein uL3 of Histophilus somni (strain 129Pt) (Haemophilus somnus).